Reading from the N-terminus, the 140-residue chain is Small ribosomal subunit protein uS11c (140 aa).

It belongs to the universal ribosomal protein uS11 family. In terms of assembly, part of the 30S ribosomal subunit.

The protein resides in the plastid. It is found in the chloroplast. This Pelargonium hortorum (Common geranium) protein is Small ribosomal subunit protein uS11c.